The primary structure comprises 464 residues: MGQILSNPVIDKESHSGADSLTAFGLCAMQGWRMSMEDSHILEPNVLTKSDKDHIAFYGIFDGHGGAKVAEYCGNKIVEILQEQKSFHEGNLPRALIDTFINTDVKLLQDPVMKEDHSGCTATSILVSKSQNLLVCGNAGDSRTVLATDGNAKALSYDHKPTLASEKSRIVAADGFVEMDRVNGNLALSRAIGDFEFKSNPKLGPEEQIVTCVPDILEHSLDYDRDEFVILACDGIWDCLTSQDCVDLVHLGLREGKTLNEISSRIIDVCCAPTTEGTGIGCDNMSIVVVALLKEGEDVAQWSDRMKSKAHRTSVRSFADKRRRVFSYYDFSKCNDEQVFAITTKKPQDKFTRDHEAAVASVTAADNDDPMDIDDTDADTDAENLDPSSQSKSKTSGPIDLASLEALLGATGGVKTDSNGNKVTYTLPQSALAQLLQTMGHDPASSHPENDSNTDHKAGRSHLQ.

In terms of domain architecture, PPM-type phosphatase spans 23–292; that stretch reads AFGLCAMQGW…DNMSIVVVAL (270 aa). Residues D62, G63, D234, and D283 each contribute to the Mn(2+) site. Residues 174–355 form an interaction with IRE1 region; that stretch reads DGFVEMDRVN…KPQDKFTRDH (182 aa). Disordered stretches follow at residues 361–398 and 434–464; these read SVTAADNDDPMDIDDTDADTDAENLDPSSQSKSKTSGP and QLLQTMGHDPASSHPENDSNTDHKAGRSHLQ. The segment covering 366 to 384 has biased composition (acidic residues); sequence DNDDPMDIDDTDADTDAEN. Phosphothreonine occurs at positions 376 and 380. A compositionally biased stretch (polar residues) spans 386-396; it reads DPSSQSKSKTS. Basic and acidic residues predominate over residues 448-458; it reads PENDSNTDHKA.

This sequence belongs to the PP2C family. Interacts with IRE1 (when phosphorylated); the interaction is direct and serves to attenuate the endoplasmic reticulum unfolded protein response. Interacts (when phosphorylated) with RAD53 (via domain FHA 1); the interaction is direct and serves to regulate DNA damage checkpoint signaling. Interacts with the ATG17-ATG29-ATG31 and ATG1-ATG13 supercomplex; to regulate induction of autophagy. Requires Mg(2+) as cofactor. Mn(2+) is required as a cofactor.

The protein localises to the nucleus. It localises to the cytoplasm. Its subcellular location is the cytosol. The catalysed reaction is O-phospho-L-seryl-[protein] + H2O = L-seryl-[protein] + phosphate. The enzyme catalyses O-phospho-L-threonyl-[protein] + H2O = L-threonyl-[protein] + phosphate. Its function is as follows. Dephosphorylating regulator for many key proteins. Dephosphorylates the cell cycle master regulator CDC28/cyclin-dependent kinase 1; its activity appears redundant with phosphatase PTC3. Dephosphorylates HOG1 at 'Thr-171', to attenuate activation of the stress-activated p38MAPK cascade; its activity appears redundant with phosphatase PTC3. Positively regulates both nonselective macroautophagy as well as the selective cytoplasm-to-vacuole (cvt) autophagy pathway and the genotoxin-induced targeted autophagy (GTA) pathway, possibly by dephosphorylating ATG13 to enable the interaction between the ATG17-ATG29-ATG31 and ATG1-ATG13 complexes; its activity appears redundant with phosphatase PTC3. Dephosphorylates RAD53, to regulate DNA damage checkpoint signaling. Dephosphorylates IRE1, to negatively regulate the endoplasmic reticulum unfolded protein response. The protein is Protein phosphatase 2C homolog 2 (PTC2) of Saccharomyces cerevisiae (strain ATCC 204508 / S288c) (Baker's yeast).